The following is a 311-amino-acid chain: Exosome complex component Rrp4 (311 aa).

The S1 motif domain occupies 63–131 (GDVVIGEITD…EVKKVKLGLK (69 aa)). One can recognise a KH domain in the interval 139–197 (RDGILVYITPTKVPRLIGKRGSMINMVKEKTHCDIVVGQNGVVWIKGEPDMERIAEKVV). The segment at 222-311 (GVEPEIQVEE…EVKDENNSER (90 aa)) is disordered. Over residues 241–300 (PESEDFEEASDYSEDVEVSPESEDIEEVSDESEDLEVESEDVEEGTDTPAAEEDDGEAGD) the composition is skewed to acidic residues. The span at 301–311 (AEVKDENNSER) shows a compositional bias: basic and acidic residues.

This sequence belongs to the RRP4 family. As to quaternary structure, component of the archaeal exosome complex. Forms a trimer of Rrp4 and/or Csl4 subunits. The trimer associates with a hexameric ring-like arrangement composed of 3 Rrp41-Rrp42 heterodimers.

Its subcellular location is the cytoplasm. Non-catalytic component of the exosome, which is a complex involved in RNA degradation. Increases the RNA binding and the efficiency of RNA degradation. Confers strong poly(A) specificity to the exosome. This Methanothermobacter thermautotrophicus (strain ATCC 29096 / DSM 1053 / JCM 10044 / NBRC 100330 / Delta H) (Methanobacterium thermoautotrophicum) protein is Exosome complex component Rrp4.